The chain runs to 304 residues: Putative HTH-type transcriptional regulatory protein Memar_2347 (304 aa).

An HTH cro/C1-type domain is found at 132 to 189 (LREVRERFRMSLGDLASHLGVSRRTISKYESGMGTTLDVAIKLEEIFNAPLVETIELL). The segment at residues 143 to 162 (LGDLASHLGVSRRTISKYES) is a DNA-binding region (H-T-H motif).

In Methanoculleus marisnigri (strain ATCC 35101 / DSM 1498 / JR1), this protein is Putative HTH-type transcriptional regulatory protein Memar_2347.